The primary structure comprises 584 residues: Phenylalanine--tRNA ligase beta subunit (584 aa).

One can recognise a B5 domain in the interval Phe-290–Pro-369. Mg(2+)-binding residues include Asp-347, Asp-353, Asp-356, and Asp-357.

The protein belongs to the phenylalanyl-tRNA synthetase beta subunit family. Type 2 subfamily. Tetramer of two alpha and two beta subunits. Requires Mg(2+) as cofactor.

It is found in the cytoplasm. The enzyme catalyses tRNA(Phe) + L-phenylalanine + ATP = L-phenylalanyl-tRNA(Phe) + AMP + diphosphate + H(+). This chain is Phenylalanine--tRNA ligase beta subunit, found in Haloarcula marismortui (strain ATCC 43049 / DSM 3752 / JCM 8966 / VKM B-1809) (Halobacterium marismortui).